The following is a 400-amino-acid chain: Elongation factor Tu (400 aa).

Residues 10–209 form the tr-type G domain; it reads KPHVNIGTIG…AVDKYIPTPQ (200 aa). The tract at residues 19–26 is G1; the sequence is GHVDHGKT. Position 19-26 (19-26) interacts with GTP; the sequence is GHVDHGKT. Residue Thr26 participates in Mg(2+) binding. The tract at residues 60-64 is G2; sequence GITIN. The G3 stretch occupies residues 81–84; that stretch reads DCPG. Residues 81–85 and 136–139 contribute to the GTP site; these read DCPGH and NKVD. The G4 stretch occupies residues 136-139; it reads NKVD. A G5 region spans residues 174–176; it reads SAL.

The protein belongs to the TRAFAC class translation factor GTPase superfamily. Classic translation factor GTPase family. EF-Tu/EF-1A subfamily. As to quaternary structure, monomer.

It is found in the cytoplasm. The enzyme catalyses GTP + H2O = GDP + phosphate + H(+). Its function is as follows. GTP hydrolase that promotes the GTP-dependent binding of aminoacyl-tRNA to the A-site of ribosomes during protein biosynthesis. The sequence is that of Elongation factor Tu from Caldicellulosiruptor bescii (strain ATCC BAA-1888 / DSM 6725 / KCTC 15123 / Z-1320) (Anaerocellum thermophilum).